The following is a 1073-amino-acid chain: Collagen alpha-2(I) chain (1073 aa).

Residues 1–939 (APDPGPGPMG…PGPAGGGYDV (939 aa)) are disordered. Low complexity-rich tracts occupy residues 100–148 (EPGA…AAGP), 178–187 (EPGPNGAVGP), and 194–215 (PGNN…AGAP). The span at 217–227 (FPGPRGGPGPQ) shows a compositional bias: pro residues. Residues 229–239 (PQGAAGQRGLA) show a composition bias toward low complexity. A compositionally biased stretch (gly residues) spans 246 to 255 (GVKGDGGPKG). 4 stretches are compositionally biased toward low complexity: residues 296–315 (MPGA…PGDA), 321–348 (SGPA…AGPA), 386–399 (APGP…TGAT), and 411–423 (QGAA…QGLP). A compositionally biased stretch (gly residues) spans 424–433 (GPAGGAGEAG). The segment covering 458 to 468 (NPGAAGASGPQ) has biased composition (low complexity). A compositionally biased stretch (gly residues) spans 481 to 508 (GTDGGKGEPGAAGAAGGPGHQGPGGMPG). A compositionally biased stretch (basic and acidic residues) spans 519–530 (KGEKGEAGHRGP). Composition is skewed to low complexity over residues 561–575 (SGSF…ARGA) and 584–597 (PAGA…PGAD). Residues 607–616 (GPSGGKGESG) are compositionally biased toward gly residues. Composition is skewed to low complexity over residues 617–642 (PAGP…TGAR), 653–680 (FPGA…PAGK), and 708–729 (SGEK…SGPL). A compositionally biased stretch (gly residues) spans 745 to 757 (GSPGGAGGVGEPG). Over residues 758-774 (RVGPAGPAGARGNLGLP) the composition is skewed to low complexity. Residues 811-820 (GESGPGGAAG) are compositionally biased toward gly residues. Residues 821–836 (AVGPAGARGAAGPSGP) show a composition bias toward low complexity. The span at 837-851 (RGEKGVAGEKGERGL) shows a compositional bias: basic and acidic residues. Low complexity-rich tracts occupy residues 857-876 (LQGM…AGPN) and 906-917 (PGARGPPGYVGP). Over residues 918 to 932 (AGPPGSPGLPGPPGP) the composition is skewed to pro residues. The Fibrillar collagen NC1 domain occupies 1039–1073 (RTNKPSRLPLLDLAPLDLGGADQEFGLDLGPVCFK).

The protein belongs to the fibrillar collagen family.

It is found in the secreted. Its subcellular location is the extracellular space. The protein localises to the extracellular matrix. This is Collagen alpha-2(I) chain from Epinephelus aeneus (White grouper).